Here is a 277-residue protein sequence, read N- to C-terminus: Phosphoenolpyruvate synthase regulatory protein (277 aa).

Residue 157–164 (GVSRCGKT) participates in ADP binding.

Belongs to the pyruvate, phosphate/water dikinase regulatory protein family. PSRP subfamily.

The catalysed reaction is [pyruvate, water dikinase] + ADP = [pyruvate, water dikinase]-phosphate + AMP + H(+). It catalyses the reaction [pyruvate, water dikinase]-phosphate + phosphate + H(+) = [pyruvate, water dikinase] + diphosphate. In terms of biological role, bifunctional serine/threonine kinase and phosphorylase involved in the regulation of the phosphoenolpyruvate synthase (PEPS) by catalyzing its phosphorylation/dephosphorylation. The protein is Phosphoenolpyruvate synthase regulatory protein of Shigella boydii serotype 4 (strain Sb227).